Reading from the N-terminus, the 149-residue chain is Secreted RxLR effector protein 17 (149 aa).

An N-terminal signal peptide occupies residues 1-24 (MRLFYFSAMSVIGLLARNNMVVVA). The RxLR-dEER motif lies at 52–78 (RSLRTREKDIQDSTVAKDDAIKVEEDR).

Belongs to the RxLR effector family.

Its subcellular location is the secreted. It is found in the host cytoplasm. The protein localises to the host nucleus. Functionally, effector that acts as a broad suppressor of cell death to interrupt plant immunity. Inhibits cell death induced by cell death-inducing proteins, including the PAMP elicitor INF1 from P.infestans. This is Secreted RxLR effector protein 17 from Plasmopara viticola (Downy mildew of grapevine).